The following is a 403-amino-acid chain: Dual-specificity RNA methyltransferase RlmN (403 aa).

Residue E126 is the Proton acceptor of the active site. One can recognise a Radical SAM core domain in the interval 132-375; it reads ETDRGTLCVS…VRTPRGRDIL (244 aa). C139 and C378 are oxidised to a cystine. Residues C146, C150, and C153 each contribute to the [4Fe-4S] cluster site. Residues 204–205, S236, 258–260, and N335 contribute to the S-adenosyl-L-methionine site; these read GE and SLH. The S-methylcysteine intermediate role is filled by C378.

Belongs to the radical SAM superfamily. RlmN family. The cofactor is [4Fe-4S] cluster.

It localises to the cytoplasm. The enzyme catalyses adenosine(2503) in 23S rRNA + 2 reduced [2Fe-2S]-[ferredoxin] + 2 S-adenosyl-L-methionine = 2-methyladenosine(2503) in 23S rRNA + 5'-deoxyadenosine + L-methionine + 2 oxidized [2Fe-2S]-[ferredoxin] + S-adenosyl-L-homocysteine. It catalyses the reaction adenosine(37) in tRNA + 2 reduced [2Fe-2S]-[ferredoxin] + 2 S-adenosyl-L-methionine = 2-methyladenosine(37) in tRNA + 5'-deoxyadenosine + L-methionine + 2 oxidized [2Fe-2S]-[ferredoxin] + S-adenosyl-L-homocysteine. In terms of biological role, specifically methylates position 2 of adenine 2503 in 23S rRNA and position 2 of adenine 37 in tRNAs. m2A2503 modification seems to play a crucial role in the proofreading step occurring at the peptidyl transferase center and thus would serve to optimize ribosomal fidelity. This is Dual-specificity RNA methyltransferase RlmN from Bradyrhizobium sp. (strain BTAi1 / ATCC BAA-1182).